The primary structure comprises 956 residues: MPVAPHELRDTIKSRDLGLFQCIDLLKQHNDNIGVHHQLVQKLYSYSYDELEFFIPQFIQLLVNFETDSMALEDFLLHYCNQFPHFSLIVFWYLQAFLFELRNEPKSYSFQTVRKFINKLQNILFNVETSFHIRGPEFRENMQPALILCGSVASAFSSPLVNEYALPIVRSQGKQQKSFVFKLASFQKSLTRNLTMKNQRLSADAITPVISDDDSKVSNRIQESQRLKTKYSKKKISAALQLDDSENYTTDEEELGYVQTLSRPKIREMKYTEVEENLKINTIIRSKKNRSKTTVNSISFFSDTDQSASMEEYNRSAQSLPELVRTRSRLDLYSSESEAALGTSRNSAELIISKKKFMGSEVKTRPYKELLKILQVNYSKKETSFIMSLQNISLRLSSVPKVARLSALRAELSIINESILPSEIDIPQLLPVTSNKNKKFHKILKLNINEACVLNSAERVPYLLLIEYLSDEIDFNPFSDQNQKIINDCVRKPEVKPNDQISGDDDTSVVSSIQEEMFLDNNASENYNEDGDLGEISLLHSRSSSRDWAKSTPGSPVARSSQEDEKFYGNVSSTTGGTIESSVLADQMRIASLMLQQLESSGQSNTQQFVSIRNRIIESMISLQDQFDFIDYETLKELKTDEQDAGKRKLENDFKLAEDWNEKKHRIRKSSIYGHLENWDLCSVIVKNGDDLPQEAFACQLISLISNIWKKHKVDFWTKRMKILITSANAGLVETITNAMSIHSIKKSLTELSIENGENAKGRIFTLKDYFQKLYGSVDSSKYVKAQENFAISLASYSIICYVLQIKDRHNGNIMLDHEGHIIHIDFGFLLSNSPGSVGFEAAPFKLTSEYVEVLGGLESKAYLKFVDTCKNCFKALRKEWGQIVSIVELMQKGSSLPCFNNGDNTSVLLQQRLQLHLSDEEIDSFIEVYLIEKSVGSMYTRLYDQFQMITQGIYS.

The 120-residue stretch at 1-120 (MPVAPHELRD…QTVRKFINKL (120 aa)) folds into the PIK helical domain. The segment at 545–573 (SRDWAKSTPGSPVARSSQEDEKFYGNVSS) is disordered. Positions 658 to 939 (EDWNEKKHRI…YLIEKSVGSM (282 aa)) constitute a PI3K/PI4K catalytic domain. A G-loop region spans residues 664 to 670 (KHRIRKS). A catalytic loop region spans residues 805 to 813 (QIKDRHNGN). Residues 824 to 848 (HIDFGFLLSNSPGSVGFEAAPFKLT) are activation loop.

The protein belongs to the PI3/PI4-kinase family. Type III PI4K subfamily.

Its subcellular location is the nucleus. It carries out the reaction a 1,2-diacyl-sn-glycero-3-phospho-(1D-myo-inositol) + ATP = a 1,2-diacyl-sn-glycero-3-phospho-(1D-myo-inositol 4-phosphate) + ADP + H(+). In terms of biological role, acts on phosphatidylinositol (PI) in the first committed step in the production of the second messenger inositol 1,4,5,-trisphosphate. The sequence is that of Phosphatidylinositol 4-kinase PIK1a (PIKA) from Candida albicans (strain SC5314 / ATCC MYA-2876) (Yeast).